The following is a 487-amino-acid chain: Glutamate mutase epsilon subunit (487 aa).

Arg-62 lines the L-glutamate pocket. Residue Gly-64 participates in adenosylcob(III)alamin binding. Arg-96 contacts L-glutamate. Asn-119 provides a ligand contact to adenosylcob(III)alamin. Residues 145–146 (RH), Glu-167, and Tyr-173 each bind L-glutamate. Pro-176 is a binding site for adenosylcob(III)alamin. Residue Tyr-177 coordinates L-glutamate. Residues Phe-289, Lys-318, and Glu-322 each coordinate adenosylcob(III)alamin. The disordered stretch occupies residues 465-487 (SDGKLIGRPGGDNSPAGGASDAD).

The protein belongs to the methylaspartate mutase GlmE subunit family. In terms of assembly, heterotetramer composed of 2 epsilon subunits (GlmE) and 2 sigma subunits (GlmS). GlmE exists as a homodimer and GlmS as a monomer. Adenosylcob(III)alamin is required as a cofactor.

It catalyses the reaction (2S,3S)-3-methyl-L-aspartate = L-glutamate. It participates in amino-acid degradation; L-glutamate degradation via mesaconate pathway; acetate and pyruvate from L-glutamate: step 1/4. Functionally, catalyzes the carbon skeleton rearrangement of L-glutamate to L-threo-3-methylaspartate ((2S,3S)-3-methylaspartate). The sequence is that of Glutamate mutase epsilon subunit from Haloarcula marismortui (strain ATCC 43049 / DSM 3752 / JCM 8966 / VKM B-1809) (Halobacterium marismortui).